A 224-amino-acid chain; its full sequence is Serum amyloid P-component (224 aa).

An N-terminal signal peptide occupies residues 1–19 (MERLLLWVSVLASLPEAFA). One can recognise a Pentraxin (PTX) domain in the interval 24-224 (TGKVFVFPRE…YVVIKPRVWS (201 aa)). N51 carries N-linked (GlcNAc...) asparagine glycosylation. C55 and C114 are oxidised to a cystine. Residues D77, N78, E155, Q156, D157, and Q167 each contribute to the Ca(2+) site.

The protein belongs to the pentraxin family. In terms of assembly, homopentamer. Pentraxin (or pentaxin) have a discoid arrangement of 5 non-covalently bound subunits. Ca(2+) serves as cofactor.

Its subcellular location is the secreted. This Sus scrofa (Pig) protein is Serum amyloid P-component (APCS).